We begin with the raw amino-acid sequence, 476 residues long: Probable cytosolic Fe-S cluster assembly factor GF22738 (476 aa).

[4Fe-4S] cluster contacts are provided by Cys23, Cys68, Cys71, Cys74, Cys187, Cys243, Cys395, and Cys399.

It belongs to the NARF family.

Component of the cytosolic iron-sulfur (Fe/S) protein assembly machinery. Required for maturation of extramitochondrial Fe/S proteins. This is Probable cytosolic Fe-S cluster assembly factor GF22738 from Drosophila ananassae (Fruit fly).